Consider the following 329-residue polypeptide: MTLVSFFSFLSKPLIMLLSNSSWRLSQPSFLLVGIPGLEESQHWIALPLGILYLLALVGNVTILFIIWMDPSLHQSMYLFLSMLAAIDLVLASSTAPKALAVLLVHAHEIGYIVCLIQMFFIHAFSSMESGVLVAMALDRYVAICHPLHHSTILHPGVIGRIGMVVLVRGLLLLIPFPILLGTLIFCQATIIGHAYCEHMAVVKLACSETTVNRAYGLTMALLVIGLDVLAIGVSYAHILQAVLKVPGSEARLKAFSTCGSHICVILVFYVPGIFSFLTHRFGHHVPHHVHVLLATRYLLMPPALNPLVYGVKTQQIRQRVLRVFTQKD.

Over 1 to 43 the chain is Extracellular; it reads MTLVSFFSFLSKPLIMLLSNSSWRLSQPSFLLVGIPGLEESQH. A glycan (N-linked (GlcNAc...) asparagine) is linked at Asn20. The helical transmembrane segment at 44-64 threads the bilayer; that stretch reads WIALPLGILYLLALVGNVTIL. Residues 65–72 are Cytoplasmic-facing; that stretch reads FIIWMDPS. A helical transmembrane segment spans residues 73–93; the sequence is LHQSMYLFLSMLAAIDLVLAS. At 94–117 the chain is on the extracellular side; sequence STAPKALAVLLVHAHEIGYIVCLI. Cys115 and Cys207 are oxidised to a cystine. The helical transmembrane segment at 118 to 138 threads the bilayer; that stretch reads QMFFIHAFSSMESGVLVAMAL. Over 139 to 157 the chain is Cytoplasmic; it reads DRYVAICHPLHHSTILHPG. The helical transmembrane segment at 158–178 threads the bilayer; it reads VIGRIGMVVLVRGLLLLIPFP. At 179-214 the chain is on the extracellular side; the sequence is ILLGTLIFCQATIIGHAYCEHMAVVKLACSETTVNR. A helical membrane pass occupies residues 215–235; the sequence is AYGLTMALLVIGLDVLAIGVS. Topologically, residues 236-255 are cytoplasmic; sequence YAHILQAVLKVPGSEARLKA. Residues 256–276 traverse the membrane as a helical segment; it reads FSTCGSHICVILVFYVPGIFS. At 277–291 the chain is on the extracellular side; it reads FLTHRFGHHVPHHVH. The helical transmembrane segment at 292 to 312 threads the bilayer; sequence VLLATRYLLMPPALNPLVYGV. The Cytoplasmic portion of the chain corresponds to 313–329; sequence KTQQIRQRVLRVFTQKD.

Belongs to the G-protein coupled receptor 1 family.

It is found in the cell membrane. Odorant receptor. This is Olfactory receptor 52L1 (OR52L1) from Homo sapiens (Human).